The following is a 348-amino-acid chain: MARTLQGEWMKVEQKGGQVPAPRSSHGIAVIGDKLYCFGGEDPPYESIDNDLYVFDFNTHTWSIAPANGDVPKTRVLGTRMVAVGTKLYVFGGRNKQLEFEDFYSYDTVKEEWKFLTKLDEKGGPEARTFHSMTSDENHVYVFGGVSKGGLNATPFRFRTIEAYNIAEGKWAQLPDPGEDFEKRGMAGFLVVQGKLWVFYGFATANDPKIPTLYGSQDYESNRVHCYDPATQKWTEVETTGFEKPSRRSCFAHAAVGKYIIIFGGEIERDPEAHQGPGTLSREGFALDTETLVWERYEGGPIKPSNRGWVASTTTTINGKKGLLVHGGKLMTNERTDEMYFFAVNSST.

7 Kelch repeats span residues 1-33 (MART…VIGD), 34-85 (KLYC…VAVG), 87-133 (KLYV…FHSM), 139-194 (HVYV…VVQG), 209-254 (KIPT…FAHA), 259-314 (YIII…ASTT), and 322-348 (GLLV…NSST). The a (Z)-N-(sulfonatooxy)alkanimidothioate site is built by glutamate 46, arginine 94, threonine 129, phenylalanine 130, and arginine 157. Arginine 94 (proton donor) is an active-site residue. Residue arginine 157 is the Proton donor of the active site. Catalysis depends on glutamate 220, which acts as the Proton acceptor. Glutamate 266 lines the Fe(2+) pocket. An a (Z)-N-(sulfonatooxy)alkanimidothioate-binding site is contributed by arginine 269. The Fe(2+) site is built by aspartate 270 and histidine 274. Residues tryptophan 309 and valine 310 each contribute to the a (Z)-N-(sulfonatooxy)alkanimidothioate site.

Homodimer. Fe(2+) serves as cofactor. In terms of tissue distribution, expressed constitutively in roots, stems, leaves, flowers, siliques and seedlings.

It carries out the reaction (Z)-N-(sulfonatooxy)prop-2-enimidothioate = allyl thiocyanate + sulfate. The enzyme catalyses (Z)-N-(sulfonatooxy)prop-2-enimidothioate = 2-(thiiran-2-yl)acetonitrile + sulfate. The catalysed reaction is (Z)-N-(sulfonatooxy)prop-2-enimidothioate = allyl isothiocyanate + sulfate. It catalyses the reaction (Z)-phenyl-N-(sulfonatooxy)methanimidothioate = phenylacetonitrile + sulfur + sulfate. It carries out the reaction glucoerucin + H2O = (Z)-4-methylsulfanylbutyl-N-(sulfonatooxy)methanimidothioate + D-glucose. The enzyme catalyses (Z)-4-methylsulfanylbutyl-N-(sulfonatooxy)methanimidothioate = 5-(methylsulfanyl)pentanenitrile + sulfur + sulfate + H(+). Its activity is regulated as follows. Stimulated by the presence of Fe(2+) leading to an increase formation of both thiocyanate and epithionitrile with allylglucosinolate as substrate in the presence of myrosinase. Repressed by EDTA. Specifier protein that contributes to constitutive and herbivore-induced simple nitrile formation. Catalyzes allylthiocyanate and corresponding epithionitrile formation from allylglucosinolate in the presence of myrosinase. Also converts aliphatic glucosinolates, such as indol-3-ylmethylglucosinolate, 4-methylsulfinylbutylglucosinolate, 4-methylthiobutyl- and benzylisothiocyanate, to simple nitriles. This chain is N-(sulfonatooxy)prop-2-enimidothioate sulfolyase, found in Thlaspi arvense (Field penny-cress).